The sequence spans 60 residues: MDKKMIFKELTELHDEYCKDCFIKKQFRKEFGKTYAHSFCINKCTVGEKLKQYGDVLTNH.

This is an uncharacterized protein from Bacillus subtilis (strain 168).